We begin with the raw amino-acid sequence, 409 residues long: Glycogenin (409 aa).

The UDP site is built by L8, Y14, and R80. Residues L8, Y14, R80, K89, D105, D107, N140, S141, D169, D172, and Q173 each contribute to the UDP-alpha-D-glucose site. Residues D105 and D107 each contribute to the UDP site. D105 and D107 together coordinate Mn(2+). Y212 is a glycosylation site (O-linked (Glc...) tyrosine). Residues H229, G232, and K235 each contribute to the UDP site. H229 is a Mn(2+) binding site. Residues G232 and K235 each contribute to the UDP-alpha-D-glucose site. The tract at residues 283–303 (RIEEDSHETEEKVDEEVSISE) is disordered.

It belongs to the glycosyltransferase 8 family. Glycogenin subfamily. Mn(2+) is required as a cofactor.

Its subcellular location is the cytoplasm. It is found in the vacuole. It carries out the reaction L-tyrosyl-[glycogenin] + UDP-alpha-D-glucose = alpha-D-glucosyl-L-tyrosyl-[glycogenin] + UDP + H(+). It catalyses the reaction [1,4-alpha-D-glucosyl](n)-L-tyrosyl-[glycogenin] + UDP-alpha-D-glucose = [1,4-alpha-D-glucosyl](n+1)-L-tyrosyl-[glycogenin] + UDP + H(+). Glycogenin participates in the glycogen biosynthetic process along with glycogen synthase and glycogen branching enzyme. It catalyzes the formation of a short alpha (1,4)-glucosyl chain covalently attached via a glucose 1-O-tyrosyl linkage to internal tyrosine residues and these chains act as primers for the elongation reaction catalyzed by glycogen synthase. This chain is Glycogenin, found in Komagataella phaffii (strain GS115 / ATCC 20864) (Yeast).